An 86-amino-acid chain; its full sequence is UPF0180 protein CA_C1486 (86 aa).

This sequence belongs to the UPF0180 family.

The protein is UPF0180 protein CA_C1486 of Clostridium acetobutylicum (strain ATCC 824 / DSM 792 / JCM 1419 / IAM 19013 / LMG 5710 / NBRC 13948 / NRRL B-527 / VKM B-1787 / 2291 / W).